The following is a 175-amino-acid chain: SKP1-like protein 20 (175 aa).

The interval 117 to 175 (ILAANYLNIKGLLDLTCQTVADMIKGKTPEEIRKTFNIKNDFTPEEEEEVRRENQWAFE) is interaction with the F-box domain of F-box proteins.

This sequence belongs to the SKP1 family. As to quaternary structure, part of a SCF (SKP1-CUL1-F-box protein) E3 ubiquitin-protein ligase complex. Interacts with rice black streaked dwarf virus RBSDV protein P7-2. Is able to form the SCF complex together with CUL1 and the viral P7-2 protein. Interacts with D3.

The protein resides in the nucleus. Its pathway is protein modification; protein ubiquitination. Its function is as follows. Involved in ubiquitination and subsequent proteasomal degradation of target proteins. Together with CUL1, a RING-box and a F-box protein, it forms a SCF E3 ubiquitin ligase complex. The functional specificity of this complex depends on the type of F-box protein. In the SCF complex, it serves as an adapter that links the F-box protein to CUL1. This Oryza sativa subsp. japonica (Rice) protein is SKP1-like protein 20.